The sequence spans 233 residues: Cobalt-containing nitrile hydratase subunit beta (233 aa).

Belongs to the nitrile hydratase subunit beta family. Heterotetramer of two alpha and two beta chains.

The catalysed reaction is an aliphatic primary amide = an aliphatic nitrile + H2O. In terms of biological role, NHase catalyzes the hydration of various nitrile compounds to the corresponding amides. The protein is Cobalt-containing nitrile hydratase subunit beta of Pseudonocardia thermophila.